Here is a 334-residue protein sequence, read N- to C-terminus: D-alanine--D-alanine ligase (334 aa).

The ATP-grasp domain occupies 111–315; the sequence is KRVCLSHGVP…YEDLCIEILR (205 aa). 141-196 contacts ATP; the sequence is AAEFGLPLMLKAPHEGSTIGIAKVETAEGMQAGFDLCAKYEAVVLVEQFVKGRELT. Positions 268, 282, and 284 each coordinate Mg(2+).

Belongs to the D-alanine--D-alanine ligase family. It depends on Mg(2+) as a cofactor. Mn(2+) serves as cofactor.

It localises to the cytoplasm. It carries out the reaction 2 D-alanine + ATP = D-alanyl-D-alanine + ADP + phosphate + H(+). The protein operates within cell wall biogenesis; peptidoglycan biosynthesis. In terms of biological role, cell wall formation. This Herminiimonas arsenicoxydans protein is D-alanine--D-alanine ligase.